Consider the following 128-residue polypeptide: MFTIYTYLAPIVAMVLVVLNYLISNNNSYIEKDGPFECGFTSYQQTRSAFSVAFILVAILFLPFDLEMSSILPYVVSAYSNGTYGLSILVIFLLSLVIAFVYEINLGALNLERRYTPIVKPLMNKLYL.

Transmembrane regions (helical) follow at residues 3–23, 52–72, and 84–104; these read TIYT…NYLI, VAFI…SSIL, and YGLS…VYEI.

Belongs to the complex I subunit 3 family.

The protein resides in the mitochondrion membrane. The enzyme catalyses a ubiquinone + NADH + 5 H(+)(in) = a ubiquinol + NAD(+) + 4 H(+)(out). In terms of biological role, core subunit of the mitochondrial membrane respiratory chain NADH dehydrogenase (Complex I) that is believed to belong to the minimal assembly required for catalysis. Complex I functions in the transfer of electrons from NADH to the respiratory chain. The immediate electron acceptor for the enzyme is believed to be ubiquinone. The sequence is that of NADH-ubiquinone oxidoreductase chain 3 (ND3) from Debaryomyces hansenii (strain ATCC 36239 / CBS 767 / BCRC 21394 / JCM 1990 / NBRC 0083 / IGC 2968) (Yeast).